Here is a 407-residue protein sequence, read N- to C-terminus: Histone-lysine N-methyltransferase SUV39H2 (407 aa).

The region spanning 43–101 (YEVEYLCDYKVEEGKEYYLVKWKGWPESSNTWEPQKNLKCPKLLENFLSDKDEYLSRMK) is the Chromo domain. One can recognise a Pre-SET domain in the interval 185-243 (TGCECSDCPAEKCCPKEAGFILAYNKQKKLKIQPGLPIYECNSFCRCGPDCPNRIVQKG). Zn(2+)-binding residues include C187, C189, C192, C197, C198, C225, C229, C231, and C235. Positions 246–369 (YSLCIFRTNN…AGEELTFDYQ (124 aa)) constitute an SET domain. S-adenosyl-L-methionine-binding positions include 257–259 (RGW), Y300, and 326–327 (NH). Zn(2+) contacts are provided by C329, C395, C397, and C402. One can recognise a Post-SET domain in the interval 391–407 (IRTVCKCGAVCCRGYLN).

It belongs to the class V-like SAM-binding methyltransferase superfamily. Histone-lysine methyltransferase family. Suvar3-9 subfamily.

Its subcellular location is the nucleus. The protein resides in the chromosome. It is found in the centromere. It catalyses the reaction L-lysyl(9)-[histone H3] + 3 S-adenosyl-L-methionine = N(6),N(6),N(6)-trimethyl-L-lysyl(9)-[histone H3] + 3 S-adenosyl-L-homocysteine + 3 H(+). Histone methyltransferase that specifically trimethylates 'Lys-9' of histone H3 using monomethylated H3 'Lys-9' as substrate. H3 'Lys-9' trimethylation represents a specific tag for epigenetic transcriptional repression by recruiting HP1 (CBX1, CBX3 and/or CBX5) proteins to methylated histones. Mainly functions in heterochromatin regions, thereby playing a central role in the establishment of constitutive heterochromatin at pericentric and telomere regions. H3 'Lys-9' trimethylation is also required to direct DNA methylation at pericentric repeats. SUV39H1 is targeted to histone H3 via its interaction with RB1 and is involved in many processes. The polypeptide is Histone-lysine N-methyltransferase SUV39H2 (SUV39H2) (Gallus gallus (Chicken)).